A 214-amino-acid chain; its full sequence is Nascent polypeptide-associated complex subunit alpha (214 aa).

The disordered stretch occupies residues M1–S80. Positions S29–Q40 are enriched in acidic residues. Over residues D41–A56 the composition is skewed to low complexity. In terms of domain architecture, NAC-A/B spans S69–A134. One can recognise a UBA domain in the interval V175–L212.

The protein belongs to the NAC-alpha family.

Its function is as follows. May promote appropriate targeting of ribosome-nascent polypeptide complexes. The polypeptide is Nascent polypeptide-associated complex subunit alpha (naca) (Xenopus tropicalis (Western clawed frog)).